Here is a 158-residue protein sequence, read N- to C-terminus: NADPH-dependent 7-cyano-7-deazaguanine reductase (158 aa).

C56 (thioimide intermediate) is an active-site residue. D63 acts as the Proton donor in catalysis. Residues 78–80 and 97–98 contribute to the substrate site; these read VES and HE.

This sequence belongs to the GTP cyclohydrolase I family. QueF type 1 subfamily.

It is found in the cytoplasm. The enzyme catalyses 7-aminomethyl-7-carbaguanine + 2 NADP(+) = 7-cyano-7-deazaguanine + 2 NADPH + 3 H(+). Its pathway is tRNA modification; tRNA-queuosine biosynthesis. Its function is as follows. Catalyzes the NADPH-dependent reduction of 7-cyano-7-deazaguanine (preQ0) to 7-aminomethyl-7-deazaguanine (preQ1). This chain is NADPH-dependent 7-cyano-7-deazaguanine reductase, found in Rhodopseudomonas palustris (strain HaA2).